A 503-amino-acid chain; its full sequence is Medium/long-chain-fatty-acid--CoA ligase FadD17 (503 aa).

This sequence belongs to the ATP-dependent AMP-binding enzyme family.

It carries out the reaction a medium-chain fatty acid + ATP + CoA = a medium-chain fatty acyl-CoA + AMP + diphosphate. The catalysed reaction is a long-chain fatty acid + ATP + CoA = a long-chain fatty acyl-CoA + AMP + diphosphate. The protein operates within lipid metabolism; fatty acid biosynthesis. Catalyzes the activation of medium/long-chain fatty acids as acyl-coenzyme A (acyl-CoA), which are then transferred to the multifunctional polyketide synthase (PKS) type III for further chain extension. This is Medium/long-chain-fatty-acid--CoA ligase FadD17 (fadD17) from Mycobacterium marinum (strain ATCC BAA-535 / M).